The primary structure comprises 224 residues: DeSI-like protein At4g17486 (224 aa).

The 138-residue stretch at 26 to 163 (TPVYLNVYDL…FCNCLLPESI (138 aa)) folds into the PPPDE domain. Active-site residues include His51 and Cys125. The tract at residues 176–201 (EFSDEDESNSEASSVSDEEGSEQHLI) is disordered.

Belongs to the DeSI family.

The protein is DeSI-like protein At4g17486 of Arabidopsis thaliana (Mouse-ear cress).